The chain runs to 623 residues: Kelch-like protein diablo (623 aa).

Residues Met-1 to His-54 form a disordered region. Thr-19 is subject to Phosphothreonine. Over residues Gly-20–Ser-32 the composition is skewed to gly residues. One can recognise a BTB domain in the interval Cys-72–Glu-139. The BACK domain maps to Cys-174–Gly-276. Kelch repeat units follow at residues Val-323 to Asp-369, Leu-371 to Glu-417, Phe-418 to Gly-464, Leu-466 to Asn-511, Ile-513 to Gly-558, and Gln-559 to Ala-605.

It functions in the pathway protein modification; protein ubiquitination. Probable substrate-specific adapter of an E3 ubiquitin-protein ligase complex which mediates the ubiquitination and subsequent proteasomal degradation of target proteins. May have a role in synapse differentiation and growth. The protein is Kelch-like protein diablo of Drosophila simulans (Fruit fly).